A 162-amino-acid chain; its full sequence is Ribosome maturation factor RimP (162 aa).

It belongs to the RimP family.

The protein resides in the cytoplasm. In terms of biological role, required for maturation of 30S ribosomal subunits. This chain is Ribosome maturation factor RimP, found in Cupriavidus pinatubonensis (strain JMP 134 / LMG 1197) (Cupriavidus necator (strain JMP 134)).